Reading from the N-terminus, the 331-residue chain is DNA fragmentation factor subunit alpha (331 aa).

N-acetylmethionine is present on Met1. Residues 17-96 form the CIDE-N domain; it reads PLKPCLLRRN…ALACNEKWIY (80 aa). Phosphothreonine is present on Thr243. The disordered stretch occupies residues 306-331; that stretch reads LRNLSARRSPLPGEPQRPKRAKRDSS.

In terms of assembly, heterodimer of DFFA and DFFB. Post-translationally, caspase-3 cleaves DFF45 at 2 sites to generate an active factor.

It localises to the cytoplasm. Inhibitor of the caspase-activated DNase (DFF40). The chain is DNA fragmentation factor subunit alpha (Dffa) from Mus musculus (Mouse).